A 430-amino-acid polypeptide reads, in one-letter code: 5-methylthioadenosine/S-adenosylhomocysteine deaminase (430 aa).

Residues histidine 63 and histidine 65 each coordinate Zn(2+). Substrate-binding residues include glutamate 92, arginine 144, and histidine 182. Residue histidine 209 participates in Zn(2+) binding. Residues glutamate 212 and aspartate 297 each contribute to the substrate site. Aspartate 297 contributes to the Zn(2+) binding site.

It belongs to the metallo-dependent hydrolases superfamily. MTA/SAH deaminase family. Requires Zn(2+) as cofactor.

The enzyme catalyses S-adenosyl-L-homocysteine + H2O + H(+) = S-inosyl-L-homocysteine + NH4(+). The catalysed reaction is S-methyl-5'-thioadenosine + H2O + H(+) = S-methyl-5'-thioinosine + NH4(+). In terms of biological role, catalyzes the deamination of 5-methylthioadenosine and S-adenosyl-L-homocysteine into 5-methylthioinosine and S-inosyl-L-homocysteine, respectively. Is also able to deaminate adenosine. In Desulforudis audaxviator (strain MP104C), this protein is 5-methylthioadenosine/S-adenosylhomocysteine deaminase.